Consider the following 186-residue polypeptide: Shikimate kinase (186 aa).

An ATP-binding site is contributed by 21 to 26; sequence GVGKTT. Threonine 25 lines the Mg(2+) pocket. Residues aspartate 43, arginine 67, and glycine 90 each contribute to the substrate site. Arginine 129 is a binding site for ATP. A substrate-binding site is contributed by arginine 147.

The protein belongs to the shikimate kinase family. Monomer. The cofactor is Mg(2+).

Its subcellular location is the cytoplasm. It carries out the reaction shikimate + ATP = 3-phosphoshikimate + ADP + H(+). Its pathway is metabolic intermediate biosynthesis; chorismate biosynthesis; chorismate from D-erythrose 4-phosphate and phosphoenolpyruvate: step 5/7. In terms of biological role, catalyzes the specific phosphorylation of the 3-hydroxyl group of shikimic acid using ATP as a cosubstrate. The sequence is that of Shikimate kinase from Bacillus subtilis (strain 168).